Consider the following 956-residue polypeptide: Thrombospondin-3 (956 aa).

The signal sequence occupies residues 1-21; the sequence is MEKPELWGVLALLLLCSYTCG. Positions 22–193 constitute a Laminin G-like domain; that stretch reads SQDLQVIDLL…VESMKIILGG (172 aa). 21 disulfide bridges follow: Cys278–Cys289, Cys283–Cys300, Cys303–Cys314, Cys320–Cys332, Cys326–Cys341, Cys344–Cys368, Cys374–Cys388, Cys382–Cys397, Cys400–Cys412, Cys418–Cys432, Cys426–Cys442, Cys444–Cys455, Cys471–Cys478, Cys483–Cys503, Cys519–Cys539, Cys542–Cys562, Cys578–Cys598, Cys601–Cys621, Cys639–Cys659, Cys679–Cys699, and Cys715–Cys936. N-linked (GlcNAc...) asparagine glycosylation occurs at Asn310. Residues 316–354 enclose the EGF-like 1; calcium-binding domain; that stretch reads DINECAHADPCFPGSSCINTMPGFHCEACPPGYKGTRVS. One can recognise an EGF-like 2; calcium-binding domain in the interval 370–410; the sequence is DIDECNDGNNGGCDPNSICTNTVGSFKCGPCRLGFLGNQSQ. Asn407 is a glycosylation site (N-linked (GlcNAc...) asparagine). Residues 414–456 form the EGF-like 3 domain; the sequence is PARTCHSPAHSPCHIHAHCLFERNGAVSCQCNVGWAGNGNVCG. 8 TSP type-3 repeats span residues 457–491, 492–527, 528–550, 551–586, 587–609, 610–647, 648–687, and 688–723; these read PDTD…NSGQ, EDAD…NKDQ, QNSD…NNDQ, KDTD…NPLQ, TDRD…NPTQ, TDAD…NSSQ, LDSD…NPNQ, and KDSD…EVTL. 2 disordered regions span residues 518–537 and 546–699; these read NCRL…SFGD and PNND…GDVC. Residues 555–568 are compositionally biased toward acidic residues; it reads GNGEGDACDNDVDG. The segment covering 612 to 628 has biased composition (acidic residues); that stretch reads ADSDLVGDVCDTNEDSD. An N-linked (GlcNAc...) asparagine glycan is attached at Asn644. Residues 650-667 are compositionally biased toward acidic residues; it reads SDNDGLGDECDGDDDNDG. In terms of domain architecture, TSP C-terminal spans 727–941; the sequence is RAYQTVILDP…LQYRCNDTVP (215 aa). Asn937 is a glycosylation site (N-linked (GlcNAc...) asparagine).

The protein belongs to the thrombospondin family. Oligomer; disulfide-linked. As to expression, brain, lung and cartilage.

Adhesive glycoprotein that mediates cell-to-cell and cell-to-matrix interactions. Can bind to fibrinogen, fibronectin, laminin and type V collagen. This is Thrombospondin-3 (Thbs3) from Mus musculus (Mouse).